We begin with the raw amino-acid sequence, 243 residues long: Carboxy-S-adenosyl-L-methionine synthase (243 aa).

S-adenosyl-L-methionine-binding positions include tyrosine 40, 65–67 (GCS), 90–91 (DN), 118–119 (DI), asparagine 133, and arginine 200.

Belongs to the class I-like SAM-binding methyltransferase superfamily. Cx-SAM synthase family. Homodimer.

The catalysed reaction is prephenate + S-adenosyl-L-methionine = carboxy-S-adenosyl-L-methionine + 3-phenylpyruvate + H2O. Its function is as follows. Catalyzes the conversion of S-adenosyl-L-methionine (SAM) to carboxy-S-adenosyl-L-methionine (Cx-SAM). This Shewanella sp. (strain ANA-3) protein is Carboxy-S-adenosyl-L-methionine synthase.